Reading from the N-terminus, the 269-residue chain is Trans-aconitate 2-methyltransferase (269 aa).

This sequence belongs to the methyltransferase superfamily. Tam family.

It is found in the cytoplasm. It carries out the reaction trans-aconitate + S-adenosyl-L-methionine = (E)-3-(methoxycarbonyl)pent-2-enedioate + S-adenosyl-L-homocysteine. Its function is as follows. Catalyzes the S-adenosylmethionine monomethyl esterification of trans-aconitate. The sequence is that of Trans-aconitate 2-methyltransferase from Streptomyces avermitilis (strain ATCC 31267 / DSM 46492 / JCM 5070 / NBRC 14893 / NCIMB 12804 / NRRL 8165 / MA-4680).